A 262-amino-acid polypeptide reads, in one-letter code: Spindlin-Z (262 aa).

Residues 1–50 (MKTPFGKSPGQRSRADAGHAGVSASMMKKRTSHKKHRNNVGPSKPISQPR) are disordered. Positions 27 to 38 (MKKRTSHKKHRN) are enriched in basic residues.

Belongs to the SPIN/STSY family. As to expression, expressed in several tissues including testis.

Its subcellular location is the nucleus. In terms of biological role, may play a role in mitosis. In Gallus gallus (Chicken), this protein is Spindlin-Z (SPINZ).